The primary structure comprises 414 residues: Cyclohex-1-ene-1-carbonyl-CoA dehydrogenase (414 aa).

Asp124 functions as the Proton acceptor in the catalytic mechanism. The FAD site is built by Ala157, Thr158, Ser164, and Thr190. Ser164 provides a ligand contact to cyclohex-1-ene-1-carbonyl-CoA. Ser164 contacts cyclohexa-1,5-diene-1-carbonyl-CoA. Lys211, Arg275, and Thr396 together coordinate cyclohex-1-ene-1-carbonyl-CoA. Positions 211, 275, and 396 each coordinate cyclohexa-1,5-diene-1-carbonyl-CoA. Thr398 and Gln400 together coordinate FAD. Cyclohex-1-ene-1-carbonyl-CoA is bound at residue Arg408. Arg408 contributes to the cyclohexa-1,5-diene-1-carbonyl-CoA binding site.

Belongs to the acyl-CoA dehydrogenase family. As to quaternary structure, homotetramer. FAD serves as cofactor.

The catalysed reaction is cyclohex-1-ene-1-carbonyl-CoA + oxidized [electron-transfer flavoprotein] + H(+) = cyclohexa-1,5-diene-1-carbonyl-CoA + reduced [electron-transfer flavoprotein]. Mediates the conversion of cyclohex-1-ene-1-carbonyl-CoA (Ch1CoA) into (E)-2-cyclohex-1,5-diene-1-carbonyl-CoA in biosynthesis of cyclohexane-1-carboxylate, a by-product produced during fermentation of benzoate and crotonate to acetate. Also able to further convert (E)-2-cyclohex-1,5-diene-1-carbonyl-CoA to benzoyl-CoA. This chain is Cyclohex-1-ene-1-carbonyl-CoA dehydrogenase, found in Syntrophus aciditrophicus (strain SB).